Reading from the N-terminus, the 479-residue chain is Cardiolipin synthase A (479 aa).

A run of 2 helical transmembrane segments spans residues 8–28 (FFGY…LHAV) and 38–58 (IAWA…YLVF). 2 PLD phosphodiesterase domains span residues 218–245 (VNFR…GDEY) and 392–419 (QPGF…DNRS). Catalysis depends on residues histidine 223, lysine 225, aspartate 230, histidine 397, lysine 399, and aspartate 404.

It belongs to the phospholipase D family. Cardiolipin synthase subfamily. ClsA sub-subfamily.

The protein localises to the cell inner membrane. The enzyme catalyses 2 a 1,2-diacyl-sn-glycero-3-phospho-(1'-sn-glycerol) = a cardiolipin + glycerol. In terms of biological role, catalyzes the reversible phosphatidyl group transfer from one phosphatidylglycerol molecule to another to form cardiolipin (CL) (diphosphatidylglycerol) and glycerol. The polypeptide is Cardiolipin synthase A (Pseudomonas putida (strain GB-1)).